The following is a 125-amino-acid chain: Bublin coiled-coil protein (125 aa).

The stretch at 46–95 (IRKLDTQLDHLNDYMSKMEERLKAHNDRMMETLKQQKEEREKRRRSFHER) forms a coiled coil. The disordered stretch occupies residues 79–125 (KQQKEEREKRRRSFHERMSQNQSEDEEFKKQMSSILKRVQSVKRTEK).

Expressed in many epithelial tissues, including the pharynx, intestine, excretory canal and hypodermis.

The protein resides in the cell junction. Its subcellular location is the cytoplasm. It localises to the cytoskeleton. Its function is as follows. Dynamic component of the endotube in intestinal cells, interacts with intermediate filament and regulates intestinal lumen morphology. This is Bublin coiled-coil protein from Caenorhabditis elegans.